The following is a 566-amino-acid chain: Bifunctional NADP phosphatase/NAD kinase (566 aa).

Positions 1–283 (MDMLEMALNI…KLVGIFGNRW (283 aa)) are NADP phosphatase. Positions 66, 85, 87, 88, and 229 each coordinate Mg(2+). Residues 275-566 (LVGIFGNRWR…YNKLKKLSLM (292 aa)) are NAD kinase. The active-site Proton acceptor is the D355. Residues 355–356 (DG), R360, 430–431 (NE), K441, R458, D460, 471–476 (TAYSLS), and N528 contribute to the NAD(+) site.

The protein in the N-terminal section; belongs to the inositol monophosphatase superfamily. It in the C-terminal section; belongs to the NAD kinase family. Homotetramer. It depends on Mg(2+) as a cofactor.

The protein localises to the cytoplasm. The enzyme catalyses NAD(+) + ATP = ADP + NADP(+) + H(+). It catalyses the reaction NADP(+) + H2O = phosphate + NAD(+). In terms of biological role, involved in the regulation of the intracellular balance between NAD(H) and NADP(H), and is a key enzyme in the biosynthesis of NADP. Catalyzes the phosphorylation and dephosphorylation of NAD and NADP, respectively. Although it shows conflicting dual activities and is able to supply NADP, it seems that its physiological role is to prevent excess accumulation of NADP. The chain is Bifunctional NADP phosphatase/NAD kinase from Methanococcus maripaludis (strain DSM 14266 / JCM 13030 / NBRC 101832 / S2 / LL).